A 214-amino-acid chain; its full sequence is Protein GrpE (214 aa).

Residues 1–13 (MKHTSEPTSQPDT) show a composition bias toward polar residues. Residues 1-61 (MKHTSEPTSQ…AAVAEATIEP (61 aa)) are disordered. The segment covering 14–57 (QAAESAQSSAAAAGQAASAYSSQAQRASADAQAIAGDEAAVAEA) has biased composition (low complexity).

The protein belongs to the GrpE family. Homodimer.

It is found in the cytoplasm. Participates actively in the response to hyperosmotic and heat shock by preventing the aggregation of stress-denatured proteins, in association with DnaK and GrpE. It is the nucleotide exchange factor for DnaK and may function as a thermosensor. Unfolded proteins bind initially to DnaJ; upon interaction with the DnaJ-bound protein, DnaK hydrolyzes its bound ATP, resulting in the formation of a stable complex. GrpE releases ADP from DnaK; ATP binding to DnaK triggers the release of the substrate protein, thus completing the reaction cycle. Several rounds of ATP-dependent interactions between DnaJ, DnaK and GrpE are required for fully efficient folding. The sequence is that of Protein GrpE from Ralstonia nicotianae (strain ATCC BAA-1114 / GMI1000) (Ralstonia solanacearum).